Here is a 160-residue protein sequence, read N- to C-terminus: S-ribosylhomocysteine lyase (160 aa).

Fe cation is bound by residues His-57, His-61, and Cys-127.

The protein belongs to the LuxS family. As to quaternary structure, homodimer. Fe cation is required as a cofactor.

It catalyses the reaction S-(5-deoxy-D-ribos-5-yl)-L-homocysteine = (S)-4,5-dihydroxypentane-2,3-dione + L-homocysteine. Involved in the synthesis of autoinducer 2 (AI-2) which is secreted by bacteria and is used to communicate both the cell density and the metabolic potential of the environment. The regulation of gene expression in response to changes in cell density is called quorum sensing. Catalyzes the transformation of S-ribosylhomocysteine (RHC) to homocysteine (HC) and 4,5-dihydroxy-2,3-pentadione (DPD). The chain is S-ribosylhomocysteine lyase from Streptococcus pneumoniae (strain CGSP14).